We begin with the raw amino-acid sequence, 250 residues long: Ubiquinone/menaquinone biosynthesis C-methyltransferase UbiE (250 aa).

S-adenosyl-L-methionine-binding positions include Thr73, Asp94, 122 to 123, and Ser139; that span reads NA.

This sequence belongs to the class I-like SAM-binding methyltransferase superfamily. MenG/UbiE family.

It carries out the reaction a 2-demethylmenaquinol + S-adenosyl-L-methionine = a menaquinol + S-adenosyl-L-homocysteine + H(+). The catalysed reaction is a 2-methoxy-6-(all-trans-polyprenyl)benzene-1,4-diol + S-adenosyl-L-methionine = a 5-methoxy-2-methyl-3-(all-trans-polyprenyl)benzene-1,4-diol + S-adenosyl-L-homocysteine + H(+). It functions in the pathway quinol/quinone metabolism; menaquinone biosynthesis; menaquinol from 1,4-dihydroxy-2-naphthoate: step 2/2. Its pathway is cofactor biosynthesis; ubiquinone biosynthesis. Its function is as follows. Methyltransferase required for the conversion of demethylmenaquinol (DMKH2) to menaquinol (MKH2) and the conversion of 2-polyprenyl-6-methoxy-1,4-benzoquinol (DDMQH2) to 2-polyprenyl-3-methyl-6-methoxy-1,4-benzoquinol (DMQH2). The polypeptide is Ubiquinone/menaquinone biosynthesis C-methyltransferase UbiE (Francisella tularensis subsp. novicida (strain U112)).